Consider the following 341-residue polypeptide: tRNA N6-adenosine threonylcarbamoyltransferase (341 aa).

Fe cation-binding residues include histidine 111 and histidine 115. Substrate-binding positions include 134–138, aspartate 167, glycine 180, and asparagine 274; that span reads LVSGG. Aspartate 302 is a Fe cation binding site.

This sequence belongs to the KAE1 / TsaD family. Requires Fe(2+) as cofactor.

Its subcellular location is the cytoplasm. The catalysed reaction is L-threonylcarbamoyladenylate + adenosine(37) in tRNA = N(6)-L-threonylcarbamoyladenosine(37) in tRNA + AMP + H(+). Its function is as follows. Required for the formation of a threonylcarbamoyl group on adenosine at position 37 (t(6)A37) in tRNAs that read codons beginning with adenine. Is involved in the transfer of the threonylcarbamoyl moiety of threonylcarbamoyl-AMP (TC-AMP) to the N6 group of A37, together with TsaE and TsaB. TsaD likely plays a direct catalytic role in this reaction. The polypeptide is tRNA N6-adenosine threonylcarbamoyltransferase (Paraburkholderia phymatum (strain DSM 17167 / CIP 108236 / LMG 21445 / STM815) (Burkholderia phymatum)).